A 358-amino-acid polypeptide reads, in one-letter code: Type II restriction enzyme SacI (358 aa).

It catalyses the reaction Endonucleolytic cleavage of DNA to give specific double-stranded fragments with terminal 5'-phosphates.. Its function is as follows. A subtype P restriction enzyme that recognizes the double-stranded sequence 5'-GAGCTC-3' and cleaves after T-5. The protein is Type II restriction enzyme SacI of Streptomyces achromogenes.